A 285-amino-acid polypeptide reads, in one-letter code: Avenin-like b2 (285 aa).

The first 18 residues, 1 to 18 (MKVFILALLALTATTAIA), serve as a signal peptide directing secretion.

Belongs to the prolamin family. Post-translationally, contains disulfide bonds.

Functionally, seed storage protein. Might be integrated via inter-chain disulfide bonds within the glutenin polymer. In Triticum aestivum (Wheat), this protein is Avenin-like b2.